The chain runs to 285 residues: Small ribosomal subunit biogenesis GTPase RsgA (285 aa).

In terms of domain architecture, CP-type G spans 56–217 (DNLLIRPIVA…IIDTPGFSSI (162 aa)). GTP is bound by residues 105 to 108 (NKID) and 159 to 167 (GPSGVGKSS). Residues C241, C246, H248, and C254 each coordinate Zn(2+).

This sequence belongs to the TRAFAC class YlqF/YawG GTPase family. RsgA subfamily. As to quaternary structure, monomer. Associates with 30S ribosomal subunit, binds 16S rRNA. Zn(2+) is required as a cofactor.

It localises to the cytoplasm. Its function is as follows. One of several proteins that assist in the late maturation steps of the functional core of the 30S ribosomal subunit. Helps release RbfA from mature subunits. May play a role in the assembly of ribosomal proteins into the subunit. Circularly permuted GTPase that catalyzes slow GTP hydrolysis, GTPase activity is stimulated by the 30S ribosomal subunit. The sequence is that of Small ribosomal subunit biogenesis GTPase RsgA from Fusobacterium nucleatum subsp. nucleatum (strain ATCC 25586 / DSM 15643 / BCRC 10681 / CIP 101130 / JCM 8532 / KCTC 2640 / LMG 13131 / VPI 4355).